The primary structure comprises 391 residues: MTLQPASGARDLNPQQVRKNHLIASKLSSLYQLWGYERISPPHIERLDTLTAAGGISNNEILKIVSDEPLGLRPEITASIVRAASTRFNEYERPLRFWSAGTSFKCNQSIDGGIDIEESFQSGVELIGTKAINAEIELLSLLIESLEVIEIDQKYKMTLLIGNTYLLELILSSFDSTKIDQIKKILSDLDYIALTTLDVKEEQRMFIKTIMNMRGKPEKVLTNLQNIYGSNSYIDKLEELFTIIEPLAKEKGIEVQLDPTLGTKYKLYSGLTFSLVSSSTSAPVTIAKGGRYDDLVKKFSSSAQNCYGIGFSISVDKVRELVSTSKEKLVNNVKVLIAYKQSANLYKALKQQKELHRKGIISVISHEPLKTIDETNQLLKTNRCNKIEWID.

This sequence belongs to the class-II aminoacyl-tRNA synthetase family. HisZ subfamily. Heteromultimer composed of HisG and HisZ subunits.

Its subcellular location is the cytoplasm. The protein operates within amino-acid biosynthesis; L-histidine biosynthesis; L-histidine from 5-phospho-alpha-D-ribose 1-diphosphate: step 1/9. Required for the first step of histidine biosynthesis. May allow the feedback regulation of ATP phosphoribosyltransferase activity by histidine. The protein is ATP phosphoribosyltransferase regulatory subunit of Prochlorococcus marinus (strain NATL2A).